The chain runs to 339 residues: DNA-directed RNA polymerase subunit alpha (339 aa).

An alpha N-terminal domain (alpha-NTD) region spans residues 1–233 (MVREEVAGST…DLFLPFLHAE (233 aa)). Residues 264 to 339 (KKGIPLNCIF…IDLLKNKLSF (76 aa)) form an alpha C-terminal domain (alpha-CTD) region.

Belongs to the RNA polymerase alpha chain family. In plastids the minimal PEP RNA polymerase catalytic core is composed of four subunits: alpha, beta, beta', and beta''. When a (nuclear-encoded) sigma factor is associated with the core the holoenzyme is formed, which can initiate transcription.

It is found in the plastid. Its subcellular location is the chloroplast. The enzyme catalyses RNA(n) + a ribonucleoside 5'-triphosphate = RNA(n+1) + diphosphate. Its function is as follows. DNA-dependent RNA polymerase catalyzes the transcription of DNA into RNA using the four ribonucleoside triphosphates as substrates. This is DNA-directed RNA polymerase subunit alpha from Festucopsis festucoides.